The primary structure comprises 544 residues: Apolipoprotein N-acyltransferase 1 (544 aa).

The next 6 membrane-spanning stretches (helical) occupy residues 30 to 50 (LNLNGFPFFAYIALIPFFLLL), 57 to 79 (FSFLWGAFSGALSYFIFNFWIIF), 91 to 111 (KYCILYSVLFFVLKIIDSYFS), 115 to 135 (FIFQTIAWVAFEYLNTLGFLG), 157 to 177 (IFGVWGISFLLVFFSACSASF), and 197 to 217 (PMMIWVGTFFAFILYGAFTKI). One can recognise a CN hydrolase domain in the interval 225–501 (ARIALVQPNR…KDILVADVTV (277 aa)). Glu-272 serves as the catalytic Proton acceptor. Lys-360 is a catalytic residue. Catalysis depends on Cys-412, which acts as the Nucleophile. Residues 514 to 534 (GDFFGVLCTIVLILNLCFIII) form a helical membrane-spanning segment.

Belongs to the CN hydrolase family. Apolipoprotein N-acyltransferase subfamily.

The protein localises to the cell inner membrane. The catalysed reaction is N-terminal S-1,2-diacyl-sn-glyceryl-L-cysteinyl-[lipoprotein] + a glycerophospholipid = N-acyl-S-1,2-diacyl-sn-glyceryl-L-cysteinyl-[lipoprotein] + a 2-acyl-sn-glycero-3-phospholipid + H(+). It participates in protein modification; lipoprotein biosynthesis (N-acyl transfer). Catalyzes the phospholipid dependent N-acylation of the N-terminal cysteine of apolipoprotein, the last step in lipoprotein maturation. The sequence is that of Apolipoprotein N-acyltransferase 1 from Treponema denticola (strain ATCC 35405 / DSM 14222 / CIP 103919 / JCM 8153 / KCTC 15104).